The sequence spans 516 residues: GMP synthase [glutamine-hydrolyzing] (516 aa).

The Glutamine amidotransferase type-1 domain occupies 8 to 198 (KILILDFGSQ…ALNICKCDAL (191 aa)). Residue C84 is the Nucleophile of the active site. Active-site residues include H172 and E174. Residues 199 to 391 (WNIENIIEND…LGLPYNMLYR (193 aa)) form the GMPS ATP-PPase domain. 226-232 (SGGVDSS) contributes to the ATP binding site.

In terms of assembly, homodimer.

It catalyses the reaction XMP + L-glutamine + ATP + H2O = GMP + L-glutamate + AMP + diphosphate + 2 H(+). The protein operates within purine metabolism; GMP biosynthesis; GMP from XMP (L-Gln route): step 1/1. Functionally, catalyzes the synthesis of GMP from XMP. The chain is GMP synthase [glutamine-hydrolyzing] from Francisella philomiragia subsp. philomiragia (strain ATCC 25017 / CCUG 19701 / FSC 153 / O#319-036).